Consider the following 568-residue polypeptide: MKVAVEGCCHGELDKIYESISYLENKDGVKVDLLLCCGDFQAVRNEGDMKCMAVPAKYRHMQTFYKYYSGEKKAPVLTIFIGGNHEASNHLQELPYGGWVAPNIYYLGYAGVIRYKGVRIGGLSGIFKSHDFKKGHFEFPPYNPETLRSVYHIRNIDVFKLKQIKMPIDIFMTHDWPRGIYHYGNTNALLRQKKFLRQEVESSTLGSPAAADLLEHLQPSYWFSAHLHVKFAALMQHEAKNNTAPKITKFLSLDKCLPHRDFLQIVEVADRPGSSEQLEYDPEWLAILKATDNLQKPTCNFWNPPQDNGLHSRWDFSASEEAMMEVVSDLSGDLCIPENFSLTVPPYDPSQPQPHALPAYSTNPQTTELCATLNLTDIYILAGQSGQIYGERGGKGATEEEDEEDSTGSADEPSDFPSDTSGLSSSYNPDEITIEDEWEEEEDGGVGCGEGKGMDAVVPEGQVGSQDSDRDSSPQRETAKRLILPAPCAKPKTEAPLHSLPRLSLPPPSACVSQGSSEEEGAFTAARVPKRTSGETTQSSAGQTGGTPQIKRRNQSIYTAVEDEESDS.

Residues Cys-8, His-10, Asp-39, and Asn-84 each contribute to the a divalent metal cation site. The lariat recognition loop stretch occupies residues 124-154; that stretch reads SGIFKSHDFKKGHFEFPPYNPETLRSVYHIR. Residues His-174, His-226, and His-228 each coordinate a divalent metal cation. A disordered region spans residues 388-568; the sequence is IYGERGGKGA…TAVEDEESDS (181 aa). Positions 417 to 428 are enriched in polar residues; sequence PSDTSGLSSSYN. Residues 432-444 are compositionally biased toward acidic residues; sequence ITIEDEWEEEEDG. Residues 467-480 show a composition bias toward basic and acidic residues; sequence DSDRDSSPQRETAK. Residue Thr-478 is modified to Phosphothreonine. A compositionally biased stretch (low complexity) spans 534 to 549; the sequence is GETTQSSAGQTGGTPQ. At Ser-568 the chain carries Phosphoserine.

The protein belongs to the lariat debranching enzyme family. The cofactor is Fe(2+). Zn(2+) serves as cofactor. Requires Mn(2+) as cofactor.

The protein localises to the nucleus. Its activity is regulated as follows. Active in presence of diverse metals including Fe(2+), Zn(2+), Mn(2+). Also activated by Ca(2+). Binds two metal cations in two adjacent alpha and beta metal-binding pockets. Its function is as follows. Cleaves the 2'-5' phosphodiester linkage at the branch point of excised lariat intron RNA and converts them into linear molecules that can be subsequently degraded, thereby facilitating ribonucleotide turnover. Linked to its role in pre-mRNA processing mechanism, may also participate in retrovirus replication and have an antiviral cell-intrinsic defense function. The polypeptide is Lariat debranching enzyme (dbr1) (Danio rerio (Zebrafish)).